We begin with the raw amino-acid sequence, 288 residues long: Polyketide biosynthesis malonyl CoA-acyl carrier protein transacylase PksC (288 aa).

Residues S87 and H193 contribute to the active site.

Belongs to the FabD family.

Its subcellular location is the cytoplasm. The enzyme catalyses holo-[ACP] + malonyl-CoA = malonyl-[ACP] + CoA. It functions in the pathway antibiotic biosynthesis; bacillaene biosynthesis. Functionally, involved in some intermediate steps for the synthesis of the antibiotic polyketide bacillaene which is involved in secondary metabolism. It catalyzes the transfer of the malonyl-CoA group to the acyl-carrier-protein AcpK (Mal-AcpK). The polypeptide is Polyketide biosynthesis malonyl CoA-acyl carrier protein transacylase PksC (pksC) (Bacillus subtilis (strain 168)).